Here is a 632-residue protein sequence, read N- to C-terminus: MAU2 chromatid cohesion factor homolog (632 aa).

TPR repeat units lie at residues 453 to 486 (GGFY…ANAE) and 493 to 526 (SCSL…ASKI).

The protein belongs to the SCC4/mau-2 family. As to quaternary structure, interacts with Nipped-B to form the cohesin loading complex.

The protein resides in the nucleus. It localises to the nucleoplasm. In terms of biological role, required for association of the cohesin complex with chromatin during interphase. Plays a role in sister chromatid cohesion and normal progression through prometaphase. In Drosophila erecta (Fruit fly), this protein is MAU2 chromatid cohesion factor homolog.